A 61-amino-acid chain; its full sequence is Metallothionein-1M (61 aa).

The beta stretch occupies residues Met1–Cys29. The a divalent metal cation site is built by Cys5, Cys7, Cys13, Cys15, Cys19, Cys21, Cys24, Cys26, Cys29, Cys33, Cys34, Cys36, Cys37, Cys41, Cys44, Cys48, Cys50, Cys57, Cys59, and Cys60. The tract at residues Lys30 to Ala61 is alpha.

Belongs to the metallothionein superfamily. Type 1 family. In terms of assembly, monomer.

Functionally, metallothioneins have a high content of cysteine residues that bind various heavy metals; these proteins are transcriptionally regulated by both heavy metals and glucocorticoids. This chain is Metallothionein-1M (MT1M), found in Homo sapiens (Human).